Reading from the N-terminus, the 558-residue chain is Dihydroxy-acid dehydratase (558 aa).

C50 contributes to the [2Fe-2S] cluster binding site. Position 82 (D82) interacts with Mg(2+). C123 lines the [2Fe-2S] cluster pocket. 2 residues coordinate Mg(2+): D124 and K125. K125 carries the N6-carboxylysine modification. C195 serves as a coordination point for [2Fe-2S] cluster. E447 is a Mg(2+) binding site. S472 acts as the Proton acceptor in catalysis.

It belongs to the IlvD/Edd family. In terms of assembly, homodimer. Requires [2Fe-2S] cluster as cofactor. The cofactor is Mg(2+).

It catalyses the reaction (2R)-2,3-dihydroxy-3-methylbutanoate = 3-methyl-2-oxobutanoate + H2O. The catalysed reaction is (2R,3R)-2,3-dihydroxy-3-methylpentanoate = (S)-3-methyl-2-oxopentanoate + H2O. The protein operates within amino-acid biosynthesis; L-isoleucine biosynthesis; L-isoleucine from 2-oxobutanoate: step 3/4. Its pathway is amino-acid biosynthesis; L-valine biosynthesis; L-valine from pyruvate: step 3/4. Functionally, functions in the biosynthesis of branched-chain amino acids. Catalyzes the dehydration of (2R,3R)-2,3-dihydroxy-3-methylpentanoate (2,3-dihydroxy-3-methylvalerate) into 2-oxo-3-methylpentanoate (2-oxo-3-methylvalerate) and of (2R)-2,3-dihydroxy-3-methylbutanoate (2,3-dihydroxyisovalerate) into 2-oxo-3-methylbutanoate (2-oxoisovalerate), the penultimate precursor to L-isoleucine and L-valine, respectively. The polypeptide is Dihydroxy-acid dehydratase (Saccharolobus islandicus (strain Y.N.15.51 / Yellowstone #2) (Sulfolobus islandicus)).